A 191-amino-acid polypeptide reads, in one-letter code: Calcium-binding protein CML42 (191 aa).

EF-hand domains are found at residues 25–60 (LNALRLQRIFDLFDKNGDGFITVEELSQALTRLGLN), 116–151 (ENESDLAEAFKVFDENGDGFISARELQTVLKKLGLP), and 154–189 (GEMERVEKMIVSVDRNQDGRVDFFEFKNMMRTVVIP). The Ca(2+) site is built by D38, N40, D42, E49, D129, N131, D133, E140, D167, N169, D171, R173, and E178.

As to quaternary structure, interacts with KIC. In terms of tissue distribution, expressed in seedling shoots, roots, rosette leaves and flowers. Expressed in the leaf trichome support cells.

Its function is as follows. Probable calcium sensor that binds calcium in vitro. Involved in the regulation of trichome branching. This Arabidopsis thaliana (Mouse-ear cress) protein is Calcium-binding protein CML42 (CML42).